The sequence spans 334 residues: Protein-methionine-sulfoxide reductase catalytic subunit MsrP (334 aa).

A signal peptide (tat-type signal) is located at residues 1–44 (MKKNQFLKESDITAESVFFMKRRQVLKALGISAAALSLPHAAHA). Mo-molybdopterin contacts are provided by residues Asn-88, 91–92 (YE), Cys-146, Thr-181, Asn-233, Arg-238, and 249–251 (GIK).

This sequence belongs to the MsrP family. As to quaternary structure, heterodimer of a catalytic subunit (MsrP) and a heme-binding subunit (MsrQ). Mo-molybdopterin is required as a cofactor. Predicted to be exported by the Tat system. The position of the signal peptide cleavage has not been experimentally proven.

The protein localises to the periplasm. The catalysed reaction is L-methionyl-[protein] + a quinone + H2O = L-methionyl-(S)-S-oxide-[protein] + a quinol. It carries out the reaction L-methionyl-[protein] + a quinone + H2O = L-methionyl-(R)-S-oxide-[protein] + a quinol. Functionally, part of the MsrPQ system that repairs oxidized periplasmic proteins containing methionine sulfoxide residues (Met-O), using respiratory chain electrons. Thus protects these proteins from oxidative-stress damage caused by reactive species of oxygen and chlorine generated by the host defense mechanisms. MsrPQ is essential for the maintenance of envelope integrity under bleach stress, rescuing a wide series of structurally unrelated periplasmic proteins from methionine oxidation, including the primary periplasmic chaperone SurA and the lipoprotein Pal. The catalytic subunit MsrP is non-stereospecific, being able to reduce both (R-) and (S-) diastereoisomers of methionine sulfoxide. The chain is Protein-methionine-sulfoxide reductase catalytic subunit MsrP from Shigella dysenteriae serotype 1 (strain Sd197).